A 254-amino-acid chain; its full sequence is 5'-nucleotidase SurE (254 aa).

A divalent metal cation-binding residues include D8, D9, S39, and N91.

The protein belongs to the SurE nucleotidase family. Requires a divalent metal cation as cofactor.

It localises to the cytoplasm. The enzyme catalyses a ribonucleoside 5'-phosphate + H2O = a ribonucleoside + phosphate. Functionally, nucleotidase that shows phosphatase activity on nucleoside 5'-monophosphates. The protein is 5'-nucleotidase SurE of Pseudoalteromonas translucida (strain TAC 125).